The sequence spans 309 residues: Acetylglutamate kinase (309 aa).

Substrate is bound by residues 82 to 83 (GG), Arg-104, and Asn-206.

This sequence belongs to the acetylglutamate kinase family. ArgB subfamily.

Its subcellular location is the cytoplasm. It catalyses the reaction N-acetyl-L-glutamate + ATP = N-acetyl-L-glutamyl 5-phosphate + ADP. The protein operates within amino-acid biosynthesis; L-arginine biosynthesis; N(2)-acetyl-L-ornithine from L-glutamate: step 2/4. Its function is as follows. Catalyzes the ATP-dependent phosphorylation of N-acetyl-L-glutamate. This chain is Acetylglutamate kinase, found in Cupriavidus metallidurans (strain ATCC 43123 / DSM 2839 / NBRC 102507 / CH34) (Ralstonia metallidurans).